The sequence spans 319 residues: Acetyl-coenzyme A carboxylase carboxyl transferase subunit alpha (319 aa).

The CoA carboxyltransferase C-terminal domain occupies 39 to 293; it reads RLQKKSNDLT…KAVLEKQLHE (255 aa).

It belongs to the AccA family. Acetyl-CoA carboxylase is a heterohexamer composed of biotin carboxyl carrier protein (AccB), biotin carboxylase (AccC) and two subunits each of ACCase subunit alpha (AccA) and ACCase subunit beta (AccD).

The protein localises to the cytoplasm. The catalysed reaction is N(6)-carboxybiotinyl-L-lysyl-[protein] + acetyl-CoA = N(6)-biotinyl-L-lysyl-[protein] + malonyl-CoA. It functions in the pathway lipid metabolism; malonyl-CoA biosynthesis; malonyl-CoA from acetyl-CoA: step 1/1. In terms of biological role, component of the acetyl coenzyme A carboxylase (ACC) complex. First, biotin carboxylase catalyzes the carboxylation of biotin on its carrier protein (BCCP) and then the CO(2) group is transferred by the carboxyltransferase to acetyl-CoA to form malonyl-CoA. The sequence is that of Acetyl-coenzyme A carboxylase carboxyl transferase subunit alpha from Neisseria gonorrhoeae (strain ATCC 700825 / FA 1090).